The sequence spans 682 residues: MKFGKVIEGQSVAEWASAYFDYKKGKKIIAGIAKNPSEGLYGTSGILGETPEEAIVKRGQIHRFHPLFQEFLDQQANKVEEFFENLVSDARERMDLISDQVDIYEKLRAFKKGTLESGSVVLIQKQHSKLRQRLDSILNFSRLQPAYHIPARKSVPTDAYTPMVSYRKLKSKLKTTLLDFYDYLKLVSQYQHLNQQAFRKIVKKYDKTLHTDLQGFWVDYMSRYTFTDFSITTNWQLHVEDIYARLFTNHNKKLALEHLKSFRQKEHFSANSMRFGLLFGAGLPLAIEAACYYNATEQSSYLLQIWGGFFLVIFAFVLFDLDCYVWEKTRVNYMLIFEFNQRKSLNWRQHLEIVGAVFFIFSLFFFLCMRNFFPGFTIYFPALFLGVVGTFLIAPVIVPYWRMRRYLIIQLIRVFLSGLSTVHFQDFFFADQMVSLTYACGNISLFFCLYKRLWRQPQLCNSSHSPLLGFFTTLPGILRVFQCFRRYSDSLKSFPHLVNALKYIFNILAQMFLSLWRIHPGLKYRVLYTIFAGVNSLFSYTWDILMDWNLLVRKDGRWQFREHRILKQLWPYIIAMILNFIVRSSFIFYCIFPNHIQHSSGISFFVTLAEIMRRCMWNILRVEHEEIYNRENLRAARELKPLDFVKPHSDVFVSHQISSDKNYTDDEDSMDDQTDVDEAQFS.

In terms of domain architecture, SPX spans 1 to 219 (MKFGKVIEGQ…HTDLQGFWVD (219 aa)). Residues 1–274 (MKFGKVIEGQ…KEHFSANSMR (274 aa)) lie on the Cytoplasmic side of the membrane. A helical transmembrane segment spans residues 275 to 295 (FGLLFGAGLPLAIEAACYYNA). The Extracellular portion of the chain corresponds to 296–300 (TEQSS). A helical transmembrane segment spans residues 301–321 (YLLQIWGGFFLVIFAFVLFDL). Residues 322–348 (DCYVWEKTRVNYMLIFEFNQRKSLNWR) are Cytoplasmic-facing. Residues 349 to 369 (QHLEIVGAVFFIFSLFFFLCM) form a helical membrane-spanning segment. Topologically, residues 370 to 377 (RNFFPGFT) are extracellular. A helical membrane pass occupies residues 378-398 (IYFPALFLGVVGTFLIAPVIV). Residues 399 to 406 (PYWRMRRY) are Cytoplasmic-facing. Residues 407–424 (LIIQLIRVFLSGLSTVHF) traverse the membrane as a helical segment. Residues 425-426 (QD) are Extracellular-facing. The chain crosses the membrane as a helical span at residues 427-447 (FFFADQMVSLTYACGNISLFF). Residues 448–525 (CLYKRLWRQP…WRIHPGLKYR (78 aa)) lie on the Cytoplasmic side of the membrane. The EXS domain maps to 459 to 654 (LCNSSHSPLL…VKPHSDVFVS (196 aa)). The chain crosses the membrane as a helical span at residues 526–546 (VLYTIFAGVNSLFSYTWDILM). Over 547–571 (DWNLLVRKDGRWQFREHRILKQLWP) the chain is Extracellular. Residues 572 to 592 (YIIAMILNFIVRSSFIFYCIF) form a helical membrane-spanning segment. The Cytoplasmic portion of the chain corresponds to 593–682 (PNHIQHSSGI…QTDVDEAQFS (90 aa)). The disordered stretch occupies residues 659-682 (SDKNYTDDEDSMDDQTDVDEAQFS). Residues 665 to 682 (DDEDSMDDQTDVDEAQFS) are compositionally biased toward acidic residues.

The protein belongs to the SYG1 (TC 2.A.94) family.

It localises to the cell membrane. Functionally, may function in G-protein coupled signal transduction. In Schizosaccharomyces pombe (strain 972 / ATCC 24843) (Fission yeast), this protein is Protein SYG1 homolog.